A 609-amino-acid polypeptide reads, in one-letter code: Sodium- and chloride-dependent GABA transporter 2 (609 aa).

The span at 1 to 13 (MDSRASGTASNGE) shows a compositional bias: polar residues. Residues 1–23 (MDSRASGTASNGETKPVYPVMEK) are disordered. Residues 1–40 (MDSRASGTASNGETKPVYPVMEKEEEEGTLERGHWNNKME) lie on the Cytoplasmic side of the membrane. 3 helical membrane-spanning segments follow: residues 41 to 61 (FVLS…FPYL), 68 to 88 (GAFF…VFLL), and 121 to 141 (IVIL…FYLF). The Extracellular portion of the chain corresponds to 142–206 (SSFTIDLPWG…GIQHLGALRW (65 aa)). A disulfide bridge links C153 with C162. 2 N-linked (GlcNAc...) asparagine glycosylation sites follow: N169 and N173. 2 helical membrane-spanning segments follow: residues 207–227 (ELAL…WKGV) and 233–253 (VVYF…IRGV). N269 carries an N-linked (GlcNAc...) asparagine glycan. 7 helical membrane passes run 282–302 (AGTQ…ALGS), 319–339 (FLNS…LGFM), 366–386 (VVML…VVLL), 418–438 (VLIL…LTEG), 453–473 (GMCL…VYGA), 490–510 (PLIK…TFLF), and 528–548 (WWGD…IPAW). At 549–609 (SLYRLGTLKG…LRLTELESHC (61 aa)) the chain is on the cytoplasmic side. Position 594 is a phosphothreonine (T594). S598 is subject to Phosphoserine.

It belongs to the sodium:neurotransmitter symporter (SNF) (TC 2.A.22) family. SLC6A13 subfamily.

The protein resides in the cell membrane. The protein localises to the basolateral cell membrane. The enzyme catalyses 4-aminobutanoate(out) + chloride(out) + 2 Na(+)(out) = 4-aminobutanoate(in) + chloride(in) + 2 Na(+)(in). It catalyses the reaction taurine(out) + chloride(out) + 2 Na(+)(out) = taurine(in) + chloride(in) + 2 Na(+)(in). The catalysed reaction is beta-alanine(out) + chloride(out) + 2 Na(+)(out) = beta-alanine(in) + chloride(in) + 2 Na(+)(in). It carries out the reaction hypotaurine(out) + chloride(out) + 2 Na(+)(out) = hypotaurine(in) + chloride(in) + 2 Na(+)(in). Functionally, mediates sodium- and chloride-dependent transport of gamma-aminobutyric acid (GABA). Can also mediate transport of beta-alanine, taurine and hypotaurine. This Macaca fascicularis (Crab-eating macaque) protein is Sodium- and chloride-dependent GABA transporter 2 (SLC6A13).